Here is a 1651-residue protein sequence, read N- to C-terminus: Alsin (1651 aa).

3 RCC1 repeats span residues aspartate 59–glutamate 108, serine 109–isoleucine 167, and arginine 169–glutamine 218. The disordered stretch occupies residues arginine 444–leucine 476. The segment covering glutamine 450–leucine 461 has biased composition (polar residues). Phosphoserine occurs at positions 459, 460, 477, and 486. Phosphothreonine is present on threonine 504. RCC1 repeat units follow at residues arginine 519–alanine 570 and serine 572–aspartate 621. Lysine 527 carries the N6-acetyllysine modification. The DH domain maps to glycine 684 to lysine 879. Residues glycine 895 to alanine 1001 form the PH domain. MORN repeat units follow at residues tyrosine 1043–valine 1065, tyrosine 1066–leucine 1088, tyrosine 1094–valine 1116, phenylalanine 1117–serine 1139, phenylalanine 1145–glutamate 1167, tyrosine 1169–tyrosine 1191, tyrosine 1192–isoleucine 1214, and tyrosine 1215–tyrosine 1238. Serine 1329 carries the phosphoserine modification. Positions lysine 1507–asparagine 1651 constitute a VPS9 domain.

In terms of assembly, forms a heteromeric complex with ALS2CL. Interacts with ALS2CL.

May act as a GTPase regulator. Controls survival and growth of spinal motoneurons. This Rattus norvegicus (Rat) protein is Alsin (Als2).